A 620-amino-acid polypeptide reads, in one-letter code: Probable potassium transport system protein Kup 1 (620 aa).

12 helical membrane passes run 10–30, 50–70, 102–122, 138–158, 168–188, 211–231, 246–266, 284–304, 336–356, 368–388, 393–413, and 415–435; these read LLISAIGVVYGDIGTSPLYAL, VLSLVFWTVMLLVTVKYVIVI, MLLGVIAAALFYGDSMITPAI, LTPYVVPITAVVLTGLFMIQK, FGPVMCLWFLVLALLGIVNIV, MMSFFALGSIVLAVTGGEALY, WFALVLPALLLNYFGQGALLL, MVVPMVGLATCATVIASQAVI, IYIPFTNWTLYIAVMALVIGF, IAVTGTMMIDTILVAFVMALM, WIAVAAVAGTLLLVDLAFFFA, and IIKVAQGGWFPLFIGVLSFTV.

It belongs to the HAK/KUP transporter (TC 2.A.72) family.

It localises to the cell inner membrane. The enzyme catalyses K(+)(in) + H(+)(in) = K(+)(out) + H(+)(out). In terms of biological role, transport of potassium into the cell. Likely operates as a K(+):H(+) symporter. The protein is Probable potassium transport system protein Kup 1 of Rhodopseudomonas palustris (strain BisB18).